The sequence spans 398 residues: Putative F-box protein At4g17780 (398 aa).

The 48-residue stretch at 8–55 (PSSIYIVADLLEDIFLRLPLKSILISKSVSKRWRSILESKTFVERRMS) folds into the F-box domain.

This is Putative F-box protein At4g17780 from Arabidopsis thaliana (Mouse-ear cress).